Here is a 258-residue protein sequence, read N- to C-terminus: Glucosamine-6-phosphate deaminase (258 aa).

Residue D65 is the Proton acceptor; for enolization step of the active site. The active-site For ring-opening step is D134. The active-site Proton acceptor; for ring-opening step is the H136. E141 serves as the catalytic For ring-opening step.

This sequence belongs to the glucosamine/galactosamine-6-phosphate isomerase family. NagB subfamily.

The enzyme catalyses alpha-D-glucosamine 6-phosphate + H2O = beta-D-fructose 6-phosphate + NH4(+). Its pathway is amino-sugar metabolism; N-acetylneuraminate degradation; D-fructose 6-phosphate from N-acetylneuraminate: step 5/5. Catalyzes the reversible isomerization-deamination of glucosamine 6-phosphate (GlcN6P) to form fructose 6-phosphate (Fru6P) and ammonium ion. The sequence is that of Glucosamine-6-phosphate deaminase from Corynebacterium kroppenstedtii (strain DSM 44385 / JCM 11950 / CIP 105744 / CCUG 35717).